Here is a 273-residue protein sequence, read N- to C-terminus: Pantothenate synthetase (273 aa).

27-34 (MGALHNGH) is a binding site for ATP. Histidine 34 serves as the catalytic Proton donor. Glutamine 58 provides a ligand contact to (R)-pantoate. Glutamine 58 is a binding site for beta-alanine. Residue 144–147 (GKKD) participates in ATP binding. A (R)-pantoate-binding site is contributed by glutamine 150. Residues valine 173 and 181–184 (LSSR) contribute to the ATP site.

This sequence belongs to the pantothenate synthetase family. Homodimer.

Its subcellular location is the cytoplasm. The enzyme catalyses (R)-pantoate + beta-alanine + ATP = (R)-pantothenate + AMP + diphosphate + H(+). Its pathway is cofactor biosynthesis; (R)-pantothenate biosynthesis; (R)-pantothenate from (R)-pantoate and beta-alanine: step 1/1. Its function is as follows. Catalyzes the condensation of pantoate with beta-alanine in an ATP-dependent reaction via a pantoyl-adenylate intermediate. This Campylobacter fetus subsp. fetus (strain 82-40) protein is Pantothenate synthetase.